A 112-amino-acid polypeptide reads, in one-letter code: Peptidyl-prolyl cis-trans isomerase (112 aa).

Positions 1–22 (MGVEKQVISSGNGQDFPKPGDR) are disordered. The PPIase FKBP-type domain occupies 20-108 (GDRITMHYTG…LFDVELLAIN (89 aa)).

The protein belongs to the FKBP-type PPIase family. FKBP1 subfamily.

Its subcellular location is the cytoplasm. It localises to the nucleus. It catalyses the reaction [protein]-peptidylproline (omega=180) = [protein]-peptidylproline (omega=0). Its function is as follows. PPIases accelerate the folding of proteins. It catalyzes the cis-trans isomerization of proline imidic peptide bonds in oligopeptides. Has an important role in sexual development and serves as the target for rapamycin action. This is Peptidyl-prolyl cis-trans isomerase (fkh1) from Schizosaccharomyces pombe (strain 972 / ATCC 24843) (Fission yeast).